Consider the following 151-residue polypeptide: Methylglyoxal synthase (151 aa).

Residues 6-151 enclose the MGS-like domain; sequence RTMPAHKHVA…DYDAYLAERT (146 aa). Residues His19, Lys23, 45–48, and 65–66 contribute to the substrate site; these read TGTT and SG. The active-site Proton donor/acceptor is the Asp71. Residue His98 coordinates substrate.

It belongs to the methylglyoxal synthase family.

It carries out the reaction dihydroxyacetone phosphate = methylglyoxal + phosphate. In terms of biological role, catalyzes the formation of methylglyoxal from dihydroxyacetone phosphate. The sequence is that of Methylglyoxal synthase from Vibrio campbellii (strain ATCC BAA-1116).